We begin with the raw amino-acid sequence, 95 residues long: Co-chaperonin GroES (95 aa).

It belongs to the GroES chaperonin family. Heptamer of 7 subunits arranged in a ring. Interacts with the chaperonin GroEL.

The protein resides in the cytoplasm. Functionally, together with the chaperonin GroEL, plays an essential role in assisting protein folding. The GroEL-GroES system forms a nano-cage that allows encapsulation of the non-native substrate proteins and provides a physical environment optimized to promote and accelerate protein folding. GroES binds to the apical surface of the GroEL ring, thereby capping the opening of the GroEL channel. This is Co-chaperonin GroES from Ruthia magnifica subsp. Calyptogena magnifica.